Reading from the N-terminus, the 370-residue chain is 3-isopropylmalate dehydrogenase (370 aa).

Position 77–90 (77–90 (GAKWDGVPYEARPE)) interacts with NAD(+). Residues Arg-97, Arg-107, Arg-135, and Asp-226 each coordinate substrate. Mg(2+)-binding residues include Asp-226, Asp-250, and Asp-254. An NAD(+)-binding site is contributed by 290 to 302 (GSAPDIAGKGLAN).

It belongs to the isocitrate and isopropylmalate dehydrogenases family. LeuB type 1 subfamily. In terms of assembly, homodimer. Mg(2+) serves as cofactor. Requires Mn(2+) as cofactor.

It is found in the cytoplasm. It carries out the reaction (2R,3S)-3-isopropylmalate + NAD(+) = 4-methyl-2-oxopentanoate + CO2 + NADH. It functions in the pathway amino-acid biosynthesis; L-leucine biosynthesis; L-leucine from 3-methyl-2-oxobutanoate: step 3/4. In terms of biological role, catalyzes the oxidation of 3-carboxy-2-hydroxy-4-methylpentanoate (3-isopropylmalate) to 3-carboxy-4-methyl-2-oxopentanoate. The product decarboxylates to 4-methyl-2 oxopentanoate. The sequence is that of 3-isopropylmalate dehydrogenase from Rhodopseudomonas palustris (strain BisB18).